A 145-amino-acid polypeptide reads, in one-letter code: Synaptojanin-2-binding protein (145 aa).

Topologically, residues 1–117 are cytoplasmic; that stretch reads MNGRVDYLVT…VHRGEGEPSG (117 aa). Residues 13-100 form the PDZ domain; that stretch reads EINLTRGPSG…AVSLRVQHRL (88 aa). Residues 118-138 form a helical; Anchor for type IV membrane protein membrane-spanning segment; that stretch reads VPVAMVLLPVFALTMVAVWAF. Over 139 to 145 the chain is Mitochondrial intermembrane; it reads VRYRKQL.

Binds (via the PDZ domain) to isoform 2A of SYNJ2 (via the unique motif in the C-terminus). Interacts (via C-terminus) with RALBP1. Interacts (via PDZ domain) with ACVR2A (via C-terminus) and ACVR2B (via C-terminus). Forms a ternary complex with ACVR2A and RALBP1. Interacts with MAPK12. Interacts with DLL1; enhances DLL1 protein stability, and promotes notch signaling in endothelial cells. In terms of tissue distribution, isoform 1 and isoform 2 are widely expressed, notably in brain, heart, lung, liver, kidney, skeletal muscle, ovary and testis. Isoform 3 is detected only in heart, spleen and testis.

The protein localises to the mitochondrion outer membrane. It is found in the cytoplasm. Its subcellular location is the perinuclear region. Its function is as follows. Isoform 1 regulates endocytosis of activin type 2 receptor kinases through the Ral/RALBP1-dependent pathway and may be involved in suppression of activin-induced signal transduction. Isoform 2 and isoform 3 show a stimulatory affect on activin-induced signal transduction and enhance activin type 2 expression at the cell surface. The chain is Synaptojanin-2-binding protein from Mus musculus (Mouse).